We begin with the raw amino-acid sequence, 444 residues long: Phosphoglucosamine mutase (444 aa).

The active-site Phosphoserine intermediate is S104. S104, D243, D245, and D247 together coordinate Mg(2+). Phosphoserine is present on S104.

Belongs to the phosphohexose mutase family. Mg(2+) serves as cofactor. Activated by phosphorylation.

It carries out the reaction alpha-D-glucosamine 1-phosphate = D-glucosamine 6-phosphate. Its function is as follows. Catalyzes the conversion of glucosamine-6-phosphate to glucosamine-1-phosphate. This is Phosphoglucosamine mutase from Neisseria meningitidis serogroup C (strain 053442).